The following is a 120-amino-acid chain: Large ribosomal subunit protein bL12 (120 aa).

This sequence belongs to the bacterial ribosomal protein bL12 family. In terms of assembly, homodimer. Part of the ribosomal stalk of the 50S ribosomal subunit. Forms a multimeric L10(L12)X complex, where L10 forms an elongated spine to which 2 to 4 L12 dimers bind in a sequential fashion. Binds GTP-bound translation factors.

Its function is as follows. Forms part of the ribosomal stalk which helps the ribosome interact with GTP-bound translation factors. Is thus essential for accurate translation. The chain is Large ribosomal subunit protein bL12 from Listeria welshimeri serovar 6b (strain ATCC 35897 / DSM 20650 / CCUG 15529 / CIP 8149 / NCTC 11857 / SLCC 5334 / V8).